A 29-amino-acid polypeptide reads, in one-letter code: Cytochrome b6-f complex subunit 8 (29 aa).

The helical transmembrane segment at 3–23 (IISIGWVSLMVVFTFSISLVV) threads the bilayer.

It belongs to the PetN family. In terms of assembly, the 4 large subunits of the cytochrome b6-f complex are cytochrome b6, subunit IV (17 kDa polypeptide, PetD), cytochrome f and the Rieske protein, while the 4 small subunits are PetG, PetL, PetM and PetN. The complex functions as a dimer.

It localises to the plastid. The protein localises to the chloroplast thylakoid membrane. Its function is as follows. Component of the cytochrome b6-f complex, which mediates electron transfer between photosystem II (PSII) and photosystem I (PSI), cyclic electron flow around PSI, and state transitions. The protein is Cytochrome b6-f complex subunit 8 of Staurastrum punctulatum (Green alga).